Reading from the N-terminus, the 355-residue chain is cGAMP-activated phospholipase (355 aa).

Residues L17–L214 form the PNPLA domain. Positions G21–G26 match the GXGXXG motif. The GXSXG signature appears at G60–G64. S62 serves as the catalytic Nucleophile. D201 (proton acceptor) is an active-site residue. The DGA/G signature appears at D201–G203.

The protein belongs to the patatin family.

The enzyme catalyses a 1,2-diacyl-sn-glycero-3-phosphocholine + H2O = a 2-acyl-sn-glycero-3-phosphocholine + a fatty acid + H(+). The catalysed reaction is 1,2-di-(9Z-octadecenoyl)-sn-glycero-3-phosphoethanolamine + 2 H2O = sn-glycero-3-phosphoethanolamine + 2 (9Z)-octadecenoate + 2 H(+). Its activity is regulated as follows. Phospholipase activity is specifically activated upon 3',3'-cGAMP (cGAMP) binding. Is not activated by the other cyclic dinucleotides 3',3'-cUAMP, 3',3'-c-diAMP and 3',3'-c-diGMP. Therefore, is specifically activated by only the nucleotide synthesized from its adjacently encoded nucleotidyltransferase (DncV). The cGAMP-activation of lipase is inhibited by T4 phage protein Acb2 (Vs.4). In terms of biological role, effector phospholipase of a CBASS antiviral system. CBASS (cyclic oligonucleotide-based antiphage signaling system) provides immunity against bacteriophages. The CD-NTase protein (DncV) synthesizes cyclic nucleotides in response to infection; these serve as specific second messenger signals. The signals activate a diverse range of effectors, leading to bacterial cell death and thus abortive phage infection. A type II-A(GA) CBASS system. Phospholipase that is activated upon binding to the cyclic dinucleotide (CDN) second messenger 3',3'-cyclic GMP-AMP (3',3'-cGAMP). Then degrades phosphatidylethanolamine (PE) and phosphatidylglycerol (PG), the major phospholipids in the cell membrane of V.cholerae, releasing 16:1 and 18:1 free fatty acids. Upon expression in E.coli with cognate DncV, the cell inner membrane shrinks and separates from the cell wall. Its function is as follows. Protects E.coli against phage infection. When the CBASS operon (capV-dncV-cap2-cap3) is introduced in E.coli MG1655 there is about 100-fold protection against phages P1 and T2. When the operon is introduced in E.coli MG1655 there is a more than 10(3) decrease in the efficiency of T2 plaque formation. Protects 100-fold against phage T5, offers no protection against T7. When the operon is introduced in E.coli MG1655 it protects against phages T2, T4, T5 and T6. Another paper shows the operon confers protection against phages P1, T2, T5 and T6 but not T4 or lambda. In Vibrio cholerae serotype O1 (strain ATCC 39315 / El Tor Inaba N16961), this protein is cGAMP-activated phospholipase.